Consider the following 316-residue polypeptide: Aspartate carbamoyltransferase catalytic subunit (316 aa).

Positions 58 and 59 each coordinate carbamoyl phosphate. Residue K86 coordinates L-aspartate. Residues R108, H136, and Q139 each contribute to the carbamoyl phosphate site. 2 residues coordinate L-aspartate: R169 and R223. The carbamoyl phosphate site is built by G264 and P265.

It belongs to the aspartate/ornithine carbamoyltransferase superfamily. ATCase family. Heterododecamer (2C3:3R2) of six catalytic PyrB chains organized as two trimers (C3), and six regulatory PyrI chains organized as three dimers (R2).

The catalysed reaction is carbamoyl phosphate + L-aspartate = N-carbamoyl-L-aspartate + phosphate + H(+). The protein operates within pyrimidine metabolism; UMP biosynthesis via de novo pathway; (S)-dihydroorotate from bicarbonate: step 2/3. Functionally, catalyzes the condensation of carbamoyl phosphate and aspartate to form carbamoyl aspartate and inorganic phosphate, the committed step in the de novo pyrimidine nucleotide biosynthesis pathway. This chain is Aspartate carbamoyltransferase catalytic subunit, found in Dinoroseobacter shibae (strain DSM 16493 / NCIMB 14021 / DFL 12).